The primary structure comprises 466 residues: Histidine--tRNA ligase (466 aa).

This sequence belongs to the class-II aminoacyl-tRNA synthetase family. As to quaternary structure, homodimer.

The protein resides in the cytoplasm. The catalysed reaction is tRNA(His) + L-histidine + ATP = L-histidyl-tRNA(His) + AMP + diphosphate + H(+). The chain is Histidine--tRNA ligase from Xylella fastidiosa (strain M23).